Consider the following 462-residue polypeptide: GTPase Der (462 aa).

EngA-type G domains lie at 2–164 (KKIA…PKKE) and 195–366 (INVA…KNYS). GTP-binding positions include 8–15 (GKPNVGKS), 55–59 (DTGGI), 116–119 (NKID), 201–208 (GRVNVGKS), 248–252 (DTAGI), and 312–315 (NKWD). In terms of domain architecture, KH-like spans 367–451 (TWLPTGQLNR…PIILRPRKRG (85 aa)).

It belongs to the TRAFAC class TrmE-Era-EngA-EngB-Septin-like GTPase superfamily. EngA (Der) GTPase family. As to quaternary structure, associates with the 50S ribosomal subunit.

Functionally, GTPase that plays an essential role in the late steps of ribosome biogenesis. This chain is GTPase Der, found in Nitratiruptor sp. (strain SB155-2).